We begin with the raw amino-acid sequence, 512 residues long: ETS translocation variant 3 (512 aa).

Positions 35–116 (IQLWHFILEL…KGKRFTYKFN (82 aa)) form a DNA-binding region, ETS. Residues 136–222 (VPQSAPPVPT…NAIGGGGIGH (87 aa)) form a disordered region. Ser139, Ser159, and Ser315 each carry phosphoserine. Positions 158 to 184 (HSPTNDVQPGRFSASSLTASGQESSNG) are enriched in polar residues. Residues 336-512 (PEESTQFSIK…QGLATAAADA (177 aa)) form a disordered region. A compositionally biased stretch (basic and acidic residues) spans 380–406 (IKVEPASEKDPESLRQSAREKEEHTQE). Residue Lys381 forms a Glycyl lysine isopeptide (Lys-Gly) (interchain with G-Cter in SUMO2) linkage. N6-acetyllysine; alternate is present on Lys388. Residue Lys388 forms a Glycyl lysine isopeptide (Lys-Gly) (interchain with G-Cter in SUMO2); alternate linkage. A compositionally biased stretch (acidic residues) spans 443 to 452 (EPLEVTEDIE). 2 stretches are compositionally biased toward basic and acidic residues: residues 453 to 468 (DRPG…KEDA) and 479 to 491 (RWND…ELSK).

This sequence belongs to the ETS family.

It is found in the nucleus. In terms of biological role, transcriptional repressor that contribute to growth arrest during terminal macrophage differentiation by repressing target genes involved in Ras-dependent proliferation. Represses MMP1 promoter activity. The sequence is that of ETS translocation variant 3 (ETV3) from Pan paniscus (Pygmy chimpanzee).